We begin with the raw amino-acid sequence, 338 residues long: Glyceraldehyde-3-phosphate dehydrogenase, cytosolic (338 aa).

NAD(+) is bound by residues 14 to 15 (RI), Asp-36, and Arg-83. D-glyceraldehyde 3-phosphate is bound by residues 154–156 (SCT), Thr-185, 214–215 (TG), and Arg-237. Residue Cys-155 is the Nucleophile of the active site. Asn-319 provides a ligand contact to NAD(+).

The protein belongs to the glyceraldehyde-3-phosphate dehydrogenase family. Homotetramer.

The protein localises to the cytoplasm. The catalysed reaction is D-glyceraldehyde 3-phosphate + phosphate + NAD(+) = (2R)-3-phospho-glyceroyl phosphate + NADH + H(+). It participates in carbohydrate degradation; glycolysis; pyruvate from D-glyceraldehyde 3-phosphate: step 1/5. In terms of biological role, key enzyme in glycolysis that catalyzes the first step of the pathway by converting D-glyceraldehyde 3-phosphate (G3P) into 3-phospho-D-glyceroyl phosphate. Essential for the maintenance of cellular ATP levels and carbohydrate metabolism. The protein is Glyceraldehyde-3-phosphate dehydrogenase, cytosolic (GAPC1) of Pisum sativum (Garden pea).